The primary structure comprises 131 residues: Profilin-2 (131 aa).

The protein belongs to the profilin family. As to quaternary structure, occurs in many kinds of cells as a complex with monomeric actin in a 1:1 ratio.

It localises to the cytoplasm. Its subcellular location is the cytoskeleton. In terms of biological role, binds to actin and affects the structure of the cytoskeleton. At high concentrations, profilin prevents the polymerization of actin, whereas it enhances it at low concentrations. By binding to PIP2, it inhibits the formation of IP3 and DG. This chain is Profilin-2 (PRO2), found in Triticum aestivum (Wheat).